A 591-amino-acid polypeptide reads, in one-letter code: uncharacterized protein (591 aa).

The span at 1–10 (MSIRGVGGNG) shows a compositional bias: gly residues. 4 disordered regions span residues 1–37 (MSIR…KVED), 110–135 (RSSA…GYRE), 324–344 (EESG…AQGP), and 487–517 (GHYQ…TPPL). Residues 11-32 (NSRIPSHNGDGSNRRSQNTKGN) are compositionally biased toward polar residues. Residues 110 to 132 (RSSATRAAESGSSSRTARGASSG) show a composition bias toward low complexity. Residues 490–507 (QDPRASDYDLPRASDYDL) show a composition bias toward basic and acidic residues.

The protein to C.muridarum TC_0268.

This is an uncharacterized protein from Chlamydia trachomatis serovar D (strain ATCC VR-885 / DSM 19411 / UW-3/Cx).